The sequence spans 130 residues: MSMQDPIADMLTRIRNGQAANKVSVSMPSAKLKVAIAKTLKEEGYITDYAVADETKPVLEITLKYFQGQPVVETIQRVSRPGLRIYKSKDELPKVMGGLGVAIVSTSKGLMTDRTARQNGMGGEVICYVA.

It belongs to the universal ribosomal protein uS8 family. In terms of assembly, part of the 30S ribosomal subunit. Contacts proteins S5 and S12.

Functionally, one of the primary rRNA binding proteins, it binds directly to 16S rRNA central domain where it helps coordinate assembly of the platform of the 30S subunit. The protein is Small ribosomal subunit protein uS8 of Shewanella sediminis (strain HAW-EB3).